Reading from the N-terminus, the 373-residue chain is Cytoplasmic tRNA 2-thiolation protein 1 (373 aa).

Belongs to the TtcA family. CTU1/NCS6/ATPBD3 subfamily.

It is found in the cytoplasm. The protein operates within tRNA modification; 5-methoxycarbonylmethyl-2-thiouridine-tRNA biosynthesis. In terms of biological role, plays a central role in 2-thiolation of mcm(5)S(2)U at tRNA wobble positions of tRNA(Lys), tRNA(Glu) and tRNA(Gln). Directly binds tRNAs and probably acts by catalyzing adenylation of tRNAs, an intermediate required for 2-thiolation. It is unclear whether it acts as a sulfurtransferase that transfers sulfur from thiocarboxylated URM1 onto the uridine of tRNAs at wobble position. The sequence is that of Cytoplasmic tRNA 2-thiolation protein 1 from Caenorhabditis elegans.